We begin with the raw amino-acid sequence, 91 residues long: Acylphosphatase (91 aa).

In terms of domain architecture, Acylphosphatase-like spans 3 to 91 (CLRAIVKGKV…ANYSDFRIKH (89 aa)). Residues arginine 18 and asparagine 36 contribute to the active site.

This sequence belongs to the acylphosphatase family.

It catalyses the reaction an acyl phosphate + H2O = a carboxylate + phosphate + H(+). This is Acylphosphatase (acyP) from Dehalococcoides mccartyi (strain ATCC BAA-2100 / JCM 16839 / KCTC 5957 / BAV1).